Here is a 119-residue protein sequence, read N- to C-terminus: Large ribosomal subunit protein uL14 (119 aa).

This sequence belongs to the universal ribosomal protein uL14 family. Part of the 50S ribosomal subunit. Forms a cluster with proteins L3 and L19. In the 70S ribosome, L14 and L19 interact and together make contacts with the 16S rRNA in bridges B5 and B8.

In terms of biological role, binds to 23S rRNA. Forms part of two intersubunit bridges in the 70S ribosome. The chain is Large ribosomal subunit protein uL14 from Wolbachia pipientis subsp. Culex pipiens (strain wPip).